A 312-amino-acid chain; its full sequence is Aquaglyceroporin-2 (312 aa).

Transmembrane regions (helical) follow at residues 78-98 (FLGNFVLIYIAKGAVITSLLV), 104-124 (LGLTIGIGVAVTMALYVSLGI), 151-171 (YIAAQMLGTFLGAACAYGVFA), 203-223 (GIFYPIFAELISTAVLLLCVC), 239-259 (VAIGALVFVMVNNFGLASPLA), and 286-306 (YYFWVPLVVPFFGAILGLFLY).

The protein belongs to the MIP/aquaporin (TC 1.A.8) family.

It is found in the membrane. It catalyses the reaction glycerol(in) = glycerol(out). The catalysed reaction is H2O(in) = H2O(out). It carries out the reaction urea(in) = urea(out). Functionally, mediates water and glycerol transport across cell membranes. Permeable to urea. Permeable to methylamine/methylammonium. Permeable to dihydroxyacetone. The chain is Aquaglyceroporin-2 from Trypanosoma brucei brucei.